Reading from the N-terminus, the 436-residue chain is Trigger factor (436 aa).

A PPIase FKBP-type domain is found at 161–246 (EDQLNIDFVG…VNTVSEPKLP (86 aa)).

This sequence belongs to the FKBP-type PPIase family. Tig subfamily.

The protein resides in the cytoplasm. It carries out the reaction [protein]-peptidylproline (omega=180) = [protein]-peptidylproline (omega=0). Functionally, involved in protein export. Acts as a chaperone by maintaining the newly synthesized protein in an open conformation. Functions as a peptidyl-prolyl cis-trans isomerase. The protein is Trigger factor of Pseudomonas syringae pv. syringae (strain B728a).